The sequence spans 315 residues: tRNA dimethylallyltransferase (315 aa).

ATP is bound at residue 14 to 21; that stretch reads GPTASGKT. 16-21 is a substrate binding site; it reads TASGKT. 3 interaction with substrate tRNA regions span residues 39-42, 163-167, and 248-253; these read DSAL, QRIQR, and RCVGYR.

The protein belongs to the IPP transferase family. In terms of assembly, monomer. Requires Mg(2+) as cofactor.

The catalysed reaction is adenosine(37) in tRNA + dimethylallyl diphosphate = N(6)-dimethylallyladenosine(37) in tRNA + diphosphate. Functionally, catalyzes the transfer of a dimethylallyl group onto the adenine at position 37 in tRNAs that read codons beginning with uridine, leading to the formation of N6-(dimethylallyl)adenosine (i(6)A). This Paraburkholderia phytofirmans (strain DSM 17436 / LMG 22146 / PsJN) (Burkholderia phytofirmans) protein is tRNA dimethylallyltransferase.